The chain runs to 268 residues: Small ribosomal subunit protein uS2 (268 aa).

A laminin-binding region spans residues 161–179 (IPCNNDKYSIALMLWMLAR).

This sequence belongs to the universal ribosomal protein uS2 family. Component of the small ribosomal subunit. Mature ribosomes consist of a small (40S) and a large (60S) subunit. The 40S subunit contains about 33 different proteins and 1 molecule of RNA (18S). The 60S subunit contains about 49 different proteins and 3 molecules of RNA (28S, 5.8S and 5S). Interacts with ribosomal protein S21.

Its subcellular location is the cytoplasm. Required for the assembly and/or stability of the 40S ribosomal subunit. Required for the processing of the 20S rRNA-precursor to mature 18S rRNA in a late step of the maturation of 40S ribosomal subunits. Binds laminin. This Echinococcus granulosus (Hydatid tapeworm) protein is Small ribosomal subunit protein uS2 (egmo3).